The chain runs to 89 residues: Small ribosomal subunit protein uS17 (89 aa).

This sequence belongs to the universal ribosomal protein uS17 family. Part of the 30S ribosomal subunit.

In terms of biological role, one of the primary rRNA binding proteins, it binds specifically to the 5'-end of 16S ribosomal RNA. This chain is Small ribosomal subunit protein uS17, found in Chlorobium chlorochromatii (strain CaD3).